A 428-amino-acid polypeptide reads, in one-letter code: Glutamate-1-semialdehyde 2,1-aminomutase (428 aa).

Lysine 265 bears the N6-(pyridoxal phosphate)lysine mark.

Belongs to the class-III pyridoxal-phosphate-dependent aminotransferase family. HemL subfamily. Homodimer. The cofactor is pyridoxal 5'-phosphate.

The protein localises to the cytoplasm. The enzyme catalyses (S)-4-amino-5-oxopentanoate = 5-aminolevulinate. It functions in the pathway porphyrin-containing compound metabolism; protoporphyrin-IX biosynthesis; 5-aminolevulinate from L-glutamyl-tRNA(Glu): step 2/2. The polypeptide is Glutamate-1-semialdehyde 2,1-aminomutase (Proteus mirabilis (strain HI4320)).